Here is a 638-residue protein sequence, read N- to C-terminus: Epithelial sodium channel subunit delta (638 aa).

A compositionally biased stretch (basic and acidic residues) spans 1-13; the sequence is MAEHRSMDGRMEA. The disordered stretch occupies residues 1–47; that stretch reads MAEHRSMDGRMEAATRGGSHLQAAAQTPPRPGPPSAPPPPPKEGHQE. Topologically, residues 1–86 are cytoplasmic; it reads MAEHRSMDGR…CSRGNRLKTT (86 aa). A compositionally biased stretch (pro residues) spans 28 to 41; it reads PPRPGPPSAPPPPP. The helical transmembrane segment at 87–107 threads the bilayer; sequence SWGLLSLGALVALCWQLGLLF. Residues 108–530 are Extracellular-facing; sequence ERHWHRPVLM…VPQLLSAMGS (423 aa). N-linked (GlcNAc...) asparagine glycosylation is found at Asn166 and Asn384. A helical membrane pass occupies residues 531–551; that stretch reads LCSLWFGASVLSLLELLELLL. Topologically, residues 552 to 638 are cytoplasmic; the sequence is DASALTLVLG…GPQPLETLDT (87 aa). The disordered stretch occupies residues 574–613; that stretch reads RASPASGASSIKPEASQMPTPAGGTSDDPEPSGPHLPRVM.

This sequence belongs to the amiloride-sensitive sodium channel (TC 1.A.6) family. SCNN1D subfamily. In terms of assembly, can form an alternative heterotrimeric epithelial sodium channel (ENaC), composed of a delta (SCNN1D), beta (SCNN1B), and gamma (SCNN1G) subunit, where the delta (SCNN1D) subunit replaces the alpha (SCNN1A) subunit.

The protein resides in the apical cell membrane. The catalysed reaction is Na(+)(in) = Na(+)(out). Originally identified and characterized by its inhibition by the diuretic drug amiloride. Functionally, potential alternative pore-forming subunit of the epithelial sodium channel (ENaC), capable of replacing the alpha/SCNN1A subunit, creating a more active channel with distinct properties. ENaC functions in epithelial tissues, where it facilitates the electrodiffusion of sodium ions from the extracellular fluid through the apical membrane of cells, with water following osmotically, regulating sodium balance and fluid homeostasis. This subunit could also function independently as a sodium channel or assemble into other tissue-specific heterotrimeric sodium channels. The sequence is that of Epithelial sodium channel subunit delta from Pan troglodytes (Chimpanzee).